Here is a 122-residue protein sequence, read N- to C-terminus: Holo-[acyl-carrier-protein] synthase (122 aa).

Positions 9 and 58 each coordinate Mg(2+).

This sequence belongs to the P-Pant transferase superfamily. AcpS family. The cofactor is Mg(2+).

It localises to the cytoplasm. The catalysed reaction is apo-[ACP] + CoA = holo-[ACP] + adenosine 3',5'-bisphosphate + H(+). Functionally, transfers the 4'-phosphopantetheine moiety from coenzyme A to a Ser of acyl-carrier-protein. This chain is Holo-[acyl-carrier-protein] synthase, found in Chlamydia caviae (strain ATCC VR-813 / DSM 19441 / 03DC25 / GPIC) (Chlamydophila caviae).